The primary structure comprises 331 residues: B-box zinc finger protein 21 (331 aa).

Zn(2+)-binding residues include Cys-5, Cys-8, Cys-28, His-34, Cys-60, Cys-63, Cys-83, and His-93. The segment at 5 to 47 (CDVCDKEEASVFCTADEASLCGGCDHQVHHANKLASKHLRFSL) adopts a B box-type 1; atypical zinc-finger fold. The B box-type 2; atypical zinc finger occupies 60-102 (CDICQDKKALLFCQQDRAILCKDCDSSIHAANEHTKKHDRFLL). 2 stretches are compositionally biased toward low complexity: residues 115–126 (KPTSKSSSSSSS) and 228–238 (NNNNNNNNNNN). Disordered regions lie at residues 115-167 (KPTS…GGDA) and 209-241 (DDDG…NTVS).

In terms of assembly, interacts with COP1, HY5 and BBX32. Interacts with FLZ1.

The protein localises to the nucleus. Functionally, transcription activator that acts as a positive regulator of seedling photomorphogenesis. Acts downstream of COP1 and play an important role in early and long-term adjustment of the shade avoidance syndrome (SAS) responses in natural environments. The sequence is that of B-box zinc finger protein 21 from Arabidopsis thaliana (Mouse-ear cress).